The sequence spans 553 residues: Probable bifunctional riboflavin biosynthesis protein RIBA 2, chloroplastic (553 aa).

The transit peptide at 1–56 (MASISPTSSSVAALRGHPVQFVKGGAVSKEAKGSISFSPVANSNNANVKFTGLRVA) directs the protein to the chloroplast. Residues 62–336 (DGAFPGDGYS…IADLIRYRRK (275 aa)) form a DHBP synthase region. The disordered stretch occupies residues 70–90 (YSGNDNTVLPKSTSVRGQDYP). The segment covering 72–85 (GNDNTVLPKSTSVR) has biased composition (polar residues). Residues 160-161 (RE), Asp-165, 275-279 (RAGHT), and Glu-299 contribute to the D-ribulose 5-phosphate site. Mg(2+) is bound at residue Glu-161. His-278 contributes to the Mg(2+) binding site. The GTP cyclohydrolase II stretch occupies residues 337-553 (RDRLVERSSV…TGSNGAKGEH (217 aa)). Position 387-391 (387-391 (RVHSE)) interacts with GTP. Zn(2+)-binding residues include Cys-392, Cys-403, and Cys-405. GTP-binding positions include Gln-408, 431-433 (EGR), and Thr-453. Asp-465 (proton acceptor; for GTP cyclohydrolase activity) is an active-site residue. The active-site Nucleophile; for GTP cyclohydrolase activity is the Arg-467. The GTP site is built by Thr-488 and Lys-493.

In the N-terminal section; belongs to the DHBP synthase family. It in the C-terminal section; belongs to the GTP cyclohydrolase II family. Requires Mg(2+) as cofactor. The cofactor is Mn(2+). Zn(2+) is required as a cofactor.

Its subcellular location is the plastid. It is found in the chloroplast. It carries out the reaction D-ribulose 5-phosphate = (2S)-2-hydroxy-3-oxobutyl phosphate + formate + H(+). The enzyme catalyses GTP + 4 H2O = 2,5-diamino-6-hydroxy-4-(5-phosphoribosylamino)-pyrimidine + formate + 2 phosphate + 3 H(+). It functions in the pathway cofactor biosynthesis; riboflavin biosynthesis; 2-hydroxy-3-oxobutyl phosphate from D-ribulose 5-phosphate: step 1/1. The protein operates within cofactor biosynthesis; riboflavin biosynthesis; 5-amino-6-(D-ribitylamino)uracil from GTP: step 1/4. Involved in riboflavin biosynthesis. Catalyzes both the conversion of D-ribulose 5-phosphate to formate and 3,4-dihydroxy-2-butanone 4-phosphate and the conversion of GTP to 2,5-diamino-6-ribosylamino-4(3H)-pyrimidinone 5'-phosphate (DARP), formate and pyrophosphate. The protein is Probable bifunctional riboflavin biosynthesis protein RIBA 2, chloroplastic (RIBA2) of Oryza sativa subsp. japonica (Rice).